Reading from the N-terminus, the 649-residue chain is V-type ATP synthase subunit I (649 aa).

7 helical membrane-spanning segments follow: residues 312 to 332, 360 to 380, 455 to 475, 485 to 505, 520 to 540, 556 to 576, and 593 to 613; these read FLSF…GLIF, FMIL…FFGV, DNIL…LGML, IGWV…LQAV, GQVG…GGII, VFSD…GAMV, and VLII…GGVI.

Belongs to the V-ATPase 116 kDa subunit family.

It localises to the cell membrane. Its function is as follows. Produces ATP from ADP in the presence of a proton gradient across the membrane. The protein is V-type ATP synthase subunit I (atpI) of Chlamydia muridarum (strain MoPn / Nigg).